Reading from the N-terminus, the 83-residue chain is Kunitz-type serine protease inhibitor microlepidin-2 (83 aa).

The first 24 residues, 1 to 24 (MSSGGLLLLLGLLTLWEVLTPVSS), serve as a signal peptide directing secretion. Residues 31-81 (CELPADTGPCRVGFPSFYYNPDEKKCLEFIYGGCEGNANNFITKEECESTC) form the BPTI/Kunitz inhibitor domain. 3 disulfides stabilise this stretch: Cys31–Cys81, Cys40–Cys64, and Cys56–Cys77.

This sequence belongs to the venom Kunitz-type family. As to expression, expressed by the venom gland.

It is found in the secreted. In terms of biological role, serine protease inhibitor. The chain is Kunitz-type serine protease inhibitor microlepidin-2 from Oxyuranus microlepidotus (Inland taipan).